The following is a 248-amino-acid chain: Probable transcriptional regulatory protein BT_2363 (248 aa).

It belongs to the TACO1 family.

It is found in the cytoplasm. This Bartonella tribocorum (strain CIP 105476 / IBS 506) protein is Probable transcriptional regulatory protein BT_2363.